We begin with the raw amino-acid sequence, 383 residues long: Acetylornithine deacetylase (383 aa).

His80 serves as a coordination point for Zn(2+). Asp82 is an active-site residue. Residue Asp112 coordinates Zn(2+). Glu144 is a catalytic residue. Glu145, Glu169, and His355 together coordinate Zn(2+).

Belongs to the peptidase M20A family. ArgE subfamily. Homodimer. Requires Zn(2+) as cofactor. Co(2+) is required as a cofactor. Glutathione serves as cofactor.

The protein localises to the cytoplasm. It carries out the reaction N(2)-acetyl-L-ornithine + H2O = L-ornithine + acetate. Its pathway is amino-acid biosynthesis; L-arginine biosynthesis; L-ornithine from N(2)-acetyl-L-ornithine (linear): step 1/1. Catalyzes the hydrolysis of the amide bond of N(2)-acetylated L-amino acids. Cleaves the acetyl group from N-acetyl-L-ornithine to form L-ornithine, an intermediate in L-arginine biosynthesis pathway, and a branchpoint in the synthesis of polyamines. The protein is Acetylornithine deacetylase of Shigella flexneri serotype 5b (strain 8401).